Reading from the N-terminus, the 501-residue chain is E3 ubiquitin-protein ligase TRIM35 (501 aa).

Methionine 1 carries the post-translational modification N-acetylmethionine. Phosphoserine is present on serine 8. The RING-type zinc-finger motif lies at 21–61 (CAVCYDPFRDAVTLRCGHNFCRRCVSGCWEVQTTPSCPVCK). Residues 96-137 (RSPRPCRAHRAPLTLFCVEDKELLCCACQADARHQEHRVQPI) form a B box-type zinc finger. Residues cysteine 101, histidine 104, cysteine 123, and histidine 129 each coordinate Zn(2+). Positions 209–252 (MKEESRKKHLLAEEKMKQLAEQTEALAREIERLQMEMKEDDMTF) form a coiled coil. The B30.2/SPRY domain maps to 284-495 (LESLQYRVWK…LRICHLRVSI (212 aa)).

Interacts with PKM isoform M2, but not isoform M1; this interaction may compete with that between PKM and FGFR1, and hence reduces FGFR1-dependent tyrosine phosphorylation of PKM. Interacts with IRF7; this interaction promotes IRF7 proteasomal degradation. Interacts with TRAF3; this interaction promotes TRAF3 activation.

The protein localises to the cytoplasm. It is found in the nucleus. It carries out the reaction S-ubiquitinyl-[E2 ubiquitin-conjugating enzyme]-L-cysteine + [acceptor protein]-L-lysine = [E2 ubiquitin-conjugating enzyme]-L-cysteine + N(6)-ubiquitinyl-[acceptor protein]-L-lysine.. The protein operates within protein modification; protein ubiquitination. Functionally, E3 ubiquitin-protein ligase that participates in multiple biological processes including cell death, glucose metabolism, and in particular, the innate immune response. Mediates 'Lys-63'-linked polyubiquitination of TRAF3 thereby promoting type I interferon production via RIG-I signaling pathway. Can also catalyze 'Lys-48'-linked polyubiquitination and proteasomal degradation of viral proteins such as influenza virus PB2. Acts as a negative feedback regulator of TLR7- and TLR9-triggered signaling. Mechanistically, promotes the 'Lys-48'-linked ubiquitination of IRF7 and induces its degradation via a proteasome-dependent pathway. Reduces FGFR1-dependent tyrosine phosphorylation of PKM, inhibiting PKM-dependent lactate production, glucose metabolism, and cell growth. The protein is E3 ubiquitin-protein ligase TRIM35 (Trim35) of Rattus norvegicus (Rat).